The chain runs to 437 residues: GTPase Obg (437 aa).

One can recognise an Obg domain in the interval Ser2–Leu160. An OBG-type G domain is found at Ala161–Ala338. GTP is bound by residues Gly167 to Ser174, Phe192 to Thr196, Asp214 to Gly217, Asn284 to Asp287, and Ser319 to Leu321. 2 residues coordinate Mg(2+): Ser174 and Thr194. Positions Gly359–Asp437 constitute an OCT domain.

This sequence belongs to the TRAFAC class OBG-HflX-like GTPase superfamily. OBG GTPase family. As to quaternary structure, monomer. The cofactor is Mg(2+).

Its subcellular location is the cytoplasm. In terms of biological role, an essential GTPase which binds GTP, GDP and possibly (p)ppGpp with moderate affinity, with high nucleotide exchange rates and a fairly low GTP hydrolysis rate. Plays a role in control of the cell cycle, stress response, ribosome biogenesis and in those bacteria that undergo differentiation, in morphogenesis control. The sequence is that of GTPase Obg from Lactococcus lactis subsp. lactis (strain IL1403) (Streptococcus lactis).